The primary structure comprises 475 residues: Isocitrate dehydrogenase [NADP] (475 aa).

Threonine 104 contributes to the NADP(+) binding site. The D-threo-isocitrate site is built by serine 113, asparagine 115, arginine 119, arginine 129, and arginine 153. Aspartate 362 provides a ligand contact to Mg(2+). NADP(+) contacts are provided by residues histidine 394–histidine 400, asparagine 407, tyrosine 446, and arginine 450.

The protein belongs to the isocitrate and isopropylmalate dehydrogenases family. Homodimer. Mg(2+) is required as a cofactor. Requires Mn(2+) as cofactor.

It is found in the cytoplasm. The catalysed reaction is D-threo-isocitrate + NADP(+) = 2-oxoglutarate + CO2 + NADPH. Its activity is regulated as follows. Inhibited non-competitively by ADP and 2-oxoglutarate, with respect to isocitrate and in a competitive manner by NADPH. In terms of biological role, catalyzes the oxidative decarboxylation of isocitrate to 2-oxoglutarate and carbon dioxide with the concomitant reduction of NADP(+). Is specific for NADP(+), cannot use NAD(+). In Synechocystis sp. (strain ATCC 27184 / PCC 6803 / Kazusa), this protein is Isocitrate dehydrogenase [NADP].